The sequence spans 229 residues: ATP-dependent dethiobiotin synthetase BioD (229 aa).

15-20 (EIGKTL) lines the ATP pocket. Position 19 (T19) interacts with Mg(2+). Residue K40 is part of the active site. ATP contacts are provided by residues D57, 118 to 121 (EGVG), and 207 to 209 (PRL). Mg(2+)-binding residues include D57 and E118.

Belongs to the dethiobiotin synthetase family. Homodimer. Mg(2+) serves as cofactor.

It localises to the cytoplasm. It carries out the reaction (7R,8S)-7,8-diammoniononanoate + CO2 + ATP = (4R,5S)-dethiobiotin + ADP + phosphate + 3 H(+). Its pathway is cofactor biosynthesis; biotin biosynthesis; biotin from 7,8-diaminononanoate: step 1/2. Catalyzes a mechanistically unusual reaction, the ATP-dependent insertion of CO2 between the N7 and N8 nitrogen atoms of 7,8-diaminopelargonic acid (DAPA, also called 7,8-diammoniononanoate) to form a ureido ring. This chain is ATP-dependent dethiobiotin synthetase BioD, found in Ralstonia nicotianae (strain ATCC BAA-1114 / GMI1000) (Ralstonia solanacearum).